Here is a 162-residue protein sequence, read N- to C-terminus: Lipoprotein signal peptidase (162 aa).

Helical transmembrane passes span Phe56 to Tyr76 and Ser84 to Asp104. Active-site residues include Asp113 and Asp139. A helical transmembrane segment spans residues Trp132–Phe152.

This sequence belongs to the peptidase A8 family.

Its subcellular location is the cell inner membrane. It carries out the reaction Release of signal peptides from bacterial membrane prolipoproteins. Hydrolyzes -Xaa-Yaa-Zaa-|-(S,diacylglyceryl)Cys-, in which Xaa is hydrophobic (preferably Leu), and Yaa (Ala or Ser) and Zaa (Gly or Ala) have small, neutral side chains.. It functions in the pathway protein modification; lipoprotein biosynthesis (signal peptide cleavage). In terms of biological role, this protein specifically catalyzes the removal of signal peptides from prolipoproteins. The chain is Lipoprotein signal peptidase from Chlorobaculum tepidum (strain ATCC 49652 / DSM 12025 / NBRC 103806 / TLS) (Chlorobium tepidum).